A 476-amino-acid chain; its full sequence is Eukaryotic translation initiation factor 3 subunit L (476 aa).

A PCI domain is found at 257–452; the sequence is DAIRMFSHIL…DLDYALEKDL (196 aa).

This sequence belongs to the eIF-3 subunit L family. Component of the eukaryotic translation initiation factor 3 (eIF-3) complex.

It is found in the cytoplasm. Component of the eukaryotic translation initiation factor 3 (eIF-3) complex, which is involved in protein synthesis of a specialized repertoire of mRNAs and, together with other initiation factors, stimulates binding of mRNA and methionyl-tRNAi to the 40S ribosome. The eIF-3 complex specifically targets and initiates translation of a subset of mRNAs involved in cell proliferation. This chain is Eukaryotic translation initiation factor 3 subunit L, found in Emericella nidulans (strain FGSC A4 / ATCC 38163 / CBS 112.46 / NRRL 194 / M139) (Aspergillus nidulans).